Reading from the N-terminus, the 502-residue chain is 4,4'-diapophytoene desaturase (4,4'-diaponeurosporene-forming) (502 aa).

5-17 (VIGAGVTGLAAAA) lines the FAD pocket.

It belongs to the carotenoid/retinoid oxidoreductase family. CrtN subfamily.

It catalyses the reaction 15-cis-4,4'-diapophytoene + 3 FAD + 3 H(+) = all-trans-4,4'-diaponeurosporene + 3 FADH2. The protein operates within carotenoid biosynthesis; staphyloxanthin biosynthesis; staphyloxanthin from farnesyl diphosphate: step 2/5. In terms of biological role, involved in the biosynthesis of the yellow-orange carotenoid staphyloxanthin, which plays a role in the virulence via its protective function against oxidative stress. Catalyzes three successive dehydrogenation reactions that lead to the introduction of three double bonds into 4,4'-diapophytoene (dehydrosqualene), with 4,4'-diapophytofluene and 4,4'-diapo-zeta-carotene as intermediates, and 4,4'-diaponeurosporene (the major deep-yellow pigment in staphylococci strains) as the end product. This Staphylococcus aureus (strain COL) protein is 4,4'-diapophytoene desaturase (4,4'-diaponeurosporene-forming).